The following is a 287-amino-acid chain: CRISPR-associated endoribonuclease Cas6 1 (287 aa).

It belongs to the CRISPR-associated endoribonuclease Cas6 family. As to quaternary structure, part of the aCascade ribonucleoprotein complex, minimally composed of Csa2 and Cas5a, which binds crRNA. Other possible components of aCascade in strain P1 are Cas6b (SSO1437) and Csa5 (SSO1443), while SSO1399, Cas5b (SSO1400) and SSO1401 have sometimes been seen weakly associated. Csa2 is probably the major RNA-binding subunit. The Csa2-Cas5a-crRNA complex also binds target DNA homologous to crRNA, probably forming an R-loop. Purified aCascade forms a filament about 6 nm in width.

Its function is as follows. CRISPR (clustered regularly interspaced short palindromic repeat) is an adaptive immune system that provides protection against mobile genetic elements (viruses, transposable elements and conjugative plasmids). CRISPR clusters contain spacers, sequences complementary to antecedent mobile elements, and target invading nucleic acids. CRISPR clusters are transcribed and processed into CRISPR RNA (crRNA). This is CRISPR-associated endoribonuclease Cas6 1 (cas6a) from Saccharolobus solfataricus (strain ATCC 35092 / DSM 1617 / JCM 11322 / P2) (Sulfolobus solfataricus).